Consider the following 264-residue polypeptide: S-adenosylmethionine decarboxylase proenzyme (264 aa).

Ser-112 acts as the Schiff-base intermediate with substrate; via pyruvic acid in catalysis. Position 112 is a pyruvic acid (Ser); by autocatalysis (Ser-112). His-117 serves as the catalytic Proton acceptor; for processing activity. Cys-140 (proton donor; for catalytic activity) is an active-site residue.

Belongs to the prokaryotic AdoMetDC family. Type 2 subfamily. In terms of assembly, heterooctamer of four alpha and four beta chains arranged as a tetramer of alpha/beta heterodimers. The cofactor is pyruvate. In terms of processing, is synthesized initially as an inactive proenzyme. Formation of the active enzyme involves a self-maturation process in which the active site pyruvoyl group is generated from an internal serine residue via an autocatalytic post-translational modification. Two non-identical subunits are generated from the proenzyme in this reaction, and the pyruvate is formed at the N-terminus of the alpha chain, which is derived from the carboxyl end of the proenzyme. The post-translation cleavage follows an unusual pathway, termed non-hydrolytic serinolysis, in which the side chain hydroxyl group of the serine supplies its oxygen atom to form the C-terminus of the beta chain, while the remainder of the serine residue undergoes an oxidative deamination to produce ammonia and the pyruvoyl group blocking the N-terminus of the alpha chain.

It carries out the reaction S-adenosyl-L-methionine + H(+) = S-adenosyl 3-(methylsulfanyl)propylamine + CO2. The protein operates within amine and polyamine biosynthesis; S-adenosylmethioninamine biosynthesis; S-adenosylmethioninamine from S-adenosyl-L-methionine: step 1/1. Its function is as follows. Catalyzes the decarboxylation of S-adenosylmethionine to S-adenosylmethioninamine (dcAdoMet), the propylamine donor required for the synthesis of the polyamines spermine and spermidine from the diamine putrescine. This Cronobacter sakazakii (strain ATCC BAA-894) (Enterobacter sakazakii) protein is S-adenosylmethionine decarboxylase proenzyme.